Consider the following 68-residue polypeptide: Beta-defensin 1 (68 aa).

A signal peptide spans 1-21 (MRTSYLLLFTLCLLLSEMASG). The propeptide occupies 22 to 32 (DNFLTGLGHRS). Cystine bridges form between Cys37–Cys66, Cys44–Cys59, and Cys49–Cys67.

Belongs to the beta-defensin family. Monomer. Homodimer.

The protein localises to the secreted. It localises to the membrane. Has bactericidal activity. May act as a ligand for C-C chemokine receptor CCR6. Positively regulates the sperm motility and bactericidal activity in a CCR6-dependent manner. Binds to CCR6 and triggers Ca2+ mobilization in the sperm which is important for its motility. This chain is Beta-defensin 1 (DEFB1), found in Macaca mulatta (Rhesus macaque).